Reading from the N-terminus, the 210-residue chain is Cytochrome c4 (210 aa).

A signal peptide spans 1–20 (MNKVLVSLLLTLGITGMAHA). Heme c is bound by residues Cys-34, Cys-37, His-38, Met-86, Cys-139, Cys-142, His-143, and Met-187.

Post-translationally, binds 2 heme c groups covalently per subunit.

The protein resides in the periplasm. Its function is as follows. Diheme, high potential cytochrome c believed to be an intermediate electron donor to terminal oxidation systems. The sequence is that of Cytochrome c4 (cc4) from Stutzerimonas stutzeri (Pseudomonas stutzeri).